A 559-amino-acid chain; its full sequence is Glutamine--tRNA ligase (559 aa).

The short motif at 44-54 (PEPNGYLHIGH) is the 'HIGH' region element. Residues 45 to 47 (EPN) and 51 to 57 (HIGHAKS) contribute to the ATP site. L-glutamine contacts are provided by D77 and Y222. ATP contacts are provided by residues T241 and 272-273 (RL). A 'KMSKS' region motif is present at residues 279-283 (LTSKR).

It belongs to the class-I aminoacyl-tRNA synthetase family. In terms of assembly, monomer.

The protein resides in the cytoplasm. It catalyses the reaction tRNA(Gln) + L-glutamine + ATP = L-glutaminyl-tRNA(Gln) + AMP + diphosphate. This is Glutamine--tRNA ligase from Actinobacillus succinogenes (strain ATCC 55618 / DSM 22257 / CCUG 43843 / 130Z).